We begin with the raw amino-acid sequence, 313 residues long: uncharacterized protein (313 aa).

The next 3 membrane-spanning stretches (helical) occupy residues 41 to 61 (LAGTMILSVLSSPALVSGLMV), 68 to 88 (VHSVLFPIPIFFSINQLFHYF), and 102 to 122 (QLLLFLISHFLLLLVLTKLVL).

This sequence belongs to the cytochrome b family.

It is found in the mitochondrion membrane. This is an uncharacterized protein from Arabidopsis thaliana (Mouse-ear cress).